The following is a 549-amino-acid chain: Thermosome subunit (549 aa).

Positions 528–538 (EKEKEGEKGGG) are enriched in basic and acidic residues. A disordered region spans residues 528–549 (EKEKEGEKGGGSEEFSGSSDLD). Over residues 540–549 (EEFSGSSDLD) the composition is skewed to low complexity.

This sequence belongs to the TCP-1 chaperonin family. Forms an oligomeric complex of eight-membered rings.

Functionally, molecular chaperone; binds unfolded polypeptides in vitro, and has a weak ATPase activity. In Pyrococcus horikoshii (strain ATCC 700860 / DSM 12428 / JCM 9974 / NBRC 100139 / OT-3), this protein is Thermosome subunit (ths).